Reading from the N-terminus, the 175-residue chain is Peptide deformylase (175 aa).

Fe cation-binding residues include C96 and H138. Residue E139 is part of the active site. Residue H142 coordinates Fe cation.

Belongs to the polypeptide deformylase family. Fe(2+) is required as a cofactor.

The catalysed reaction is N-terminal N-formyl-L-methionyl-[peptide] + H2O = N-terminal L-methionyl-[peptide] + formate. Removes the formyl group from the N-terminal Met of newly synthesized proteins. Requires at least a dipeptide for an efficient rate of reaction. N-terminal L-methionine is a prerequisite for activity but the enzyme has broad specificity at other positions. This Helicobacter acinonychis (strain Sheeba) protein is Peptide deformylase.